Reading from the N-terminus, the 323-residue chain is Elongation factor P--(R)-beta-lysine ligase (323 aa).

74–76 is a substrate binding site; the sequence is SPE. ATP-binding positions include 98–100 and Asn107; that span reads RNE. Residue Tyr116 participates in substrate binding. Residue 242–243 coordinates ATP; that stretch reads EL. Glu249 contacts substrate. An ATP-binding site is contributed by Gly298.

Belongs to the class-II aminoacyl-tRNA synthetase family. EpmA subfamily. As to quaternary structure, homodimer.

It carries out the reaction D-beta-lysine + L-lysyl-[protein] + ATP = N(6)-((3R)-3,6-diaminohexanoyl)-L-lysyl-[protein] + AMP + diphosphate + H(+). In terms of biological role, with EpmB is involved in the beta-lysylation step of the post-translational modification of translation elongation factor P (EF-P). Catalyzes the ATP-dependent activation of (R)-beta-lysine produced by EpmB, forming a lysyl-adenylate, from which the beta-lysyl moiety is then transferred to the epsilon-amino group of a conserved specific lysine residue in EF-P. The protein is Elongation factor P--(R)-beta-lysine ligase of Vibrio atlanticus (strain LGP32) (Vibrio splendidus (strain Mel32)).